Here is a 699-residue protein sequence, read N- to C-terminus: Receptor-type tyrosine-protein phosphatase epsilon (699 aa).

An N-terminal signal peptide occupies residues 1-19 (MEPFCPLLLASFSLSLARA). Over residues 20 to 36 (GQGNDTTPTESNWTSTT) the composition is skewed to low complexity. Positions 20–40 (GQGNDTTPTESNWTSTTAGPP) are disordered. The Extracellular segment spans residues 20–45 (GQGNDTTPTESNWTSTTAGPPDPGAS). Asparagine 23 and asparagine 31 each carry an N-linked (GlcNAc...) asparagine glycan. A helical membrane pass occupies residues 46–68 (QPLLTWLLLPLLLLLFLLAAYFF). Residues 69–699 (RFRKQRKAVV…DIFSDYANFK (631 aa)) lie on the Cytoplasmic side of the membrane. 2 consecutive Tyrosine-protein phosphatase domains span residues 134 to 393 (FREE…LLEY) and 425 to 688 (LEEE…VQDF). Substrate is bound by residues aspartate 302, 334-340 (CSAGVGR), and glutamine 378. Catalysis depends on cysteine 334, which acts as the Phosphocysteine intermediate. Cysteine 629 (phosphocysteine intermediate) is an active-site residue. Phosphotyrosine is present on tyrosine 695.

This sequence belongs to the protein-tyrosine phosphatase family. Receptor class 4 subfamily. Monomer. Isoform 2: Homodimer. Can form oligomers. Dimerization is increased by oxidative stress and decreased by EGFR. Isoform 2 interacts with GRB2. Post-translationally, a catalytically active cytoplasmic form (p65) is produced by proteolytic cleavage of either isoform 1, isoform 2 or isoform 3. Phosphorylated on tyrosine residues by tyrosine kinase Neu. In terms of processing, glycosylated. Isoform 2 is expressed in the spleen and thymus (at protein level). Detected in fibroblasts, myeloid cells, macrophages, and T-cells but not in B-cell lines. Isoform 1 and isoform 2 are expressed predominantly in the brain, testes, and lungs, with lower levels present in lymph nodes, thymus, spleen, heart and mammary glands. Isoform 1 is expressed in osteoclasts and not in osteoblasts and its expression is related to osteoclast differentiation. It is also expressed in the erythrocytes. Isoform 2 is strongly expressed in skeletal muscle and L6 skeletal muscle cell line.

Its subcellular location is the cell membrane. The protein resides in the cytoplasm. The catalysed reaction is O-phospho-L-tyrosyl-[protein] + H2O = L-tyrosyl-[protein] + phosphate. Inhibited by alendronate (ALN), orthovanadate, and phenylarsine oxide (PAO). Its function is as follows. Acts as a negative regulator of insulin receptor (IR) signaling and is involved in insulin-induced glucose metabolism mainly through direct dephosphorylation and inactivation of IR in hepatocytes and liver. Plays a critical role in signaling transduction pathways and phosphoprotein network topology in red blood cells. May play a role in osteoclast formation and function. Functionally, acts as a negative regulator of insulin receptor (IR) signaling in skeletal muscle. Regulates insulin-induced tyrosine phosphorylation of insulin receptor (IR) and insulin receptor substrate 1 (IRS-1), phosphorylation of protein kinase B and glycogen synthase kinase-3 and insulin induced stimulation of glucose uptake. Isoform 1 and isoform 2 act as a negative regulator of FceRI-mediated signal transduction leading to cytokine production and degranulation, most likely by acting at the level of SYK to affect downstream events such as phosphorylation of SLP76 and LAT and mobilization of Ca(2+). The protein is Receptor-type tyrosine-protein phosphatase epsilon (Ptpre) of Mus musculus (Mouse).